The sequence spans 926 residues: Ubiquitin carboxyl-terminal hydrolase 4 (926 aa).

Residues 205 to 328 (SQMEILLIDI…WLKSNYGRQV (124 aa)) enclose the Rhodanese domain. The residue at position 443 (S443) is a Phosphoserine. The USP domain maps to 562 to 923 (VGLENLGNSC…NAYVLFYHRV (362 aa)). C571 (nucleophile) is an active-site residue. The Proton acceptor role is filled by H880.

It belongs to the peptidase C19 family. In terms of assembly, interacts with BRO1, RFU1 and VPS32. Associates with the 26S proteasome.

Its subcellular location is the cytoplasm. It is found in the late endosome membrane. The catalysed reaction is Thiol-dependent hydrolysis of ester, thioester, amide, peptide and isopeptide bonds formed by the C-terminal Gly of ubiquitin (a 76-residue protein attached to proteins as an intracellular targeting signal).. With respect to regulation, RFU1 is an inhibitor of deubiquitination activity. In terms of biological role, ubiquitin thioesterase that acts at the late endosome/prevacuolar compartment to recover ubiquitin from ubiquitinated membrane proteins en route to the vacuole. Also removes ubiquitin from soluble proteins targeted to proteasomes. Is essential to maintain a normal level of free ubiquitin. Involved in the ammonium-induced down-regulation of the GAP1 permease and the UME3 destruction in response to oxidative stress. Has a role in the RAD9 checkpoint response to TOP1 poisons. Required for promoting coordination of DNA replication and avoids DNA overreplication. This chain is Ubiquitin carboxyl-terminal hydrolase 4 (DOA4), found in Saccharomyces cerevisiae (strain ATCC 204508 / S288c) (Baker's yeast).